A 293-amino-acid polypeptide reads, in one-letter code: Cbb3-type cytochrome c oxidase subunit FixP (293 aa).

Residues 1–11 (MSTSHESHHAP) are compositionally biased toward basic and acidic residues. A disordered region spans residues 1-25 (MSTSHESHHAPVDGAGGPSTTGHEW). The chain crosses the membrane as a helical span at residues 43-63 (FYATIIWAFGYWVAYPAWPLV). Cytochrome c domains are found at residues 114-201 (LARA…RSLS) and 209-290 (PAAK…HTLG). The heme c site is built by Cys127, Cys130, His131, Met178, Cys222, Cys225, His226, and Met267.

This sequence belongs to the CcoP / FixP family. In terms of assembly, component of the cbb3-type cytochrome c oxidase at least composed of FixN, FixO, FixQ and FixP. The cofactor is heme c.

The protein localises to the cell inner membrane. Its pathway is energy metabolism; oxidative phosphorylation. Its function is as follows. C-type cytochrome. Part of the cbb3-type cytochrome c oxidase complex. FixP subunit is required for transferring electrons from donor cytochrome c via its heme groups to FixO subunit. From there, electrons are shuttled to the catalytic binuclear center of FixN subunit where oxygen reduction takes place. The complex also functions as a proton pump. This is Cbb3-type cytochrome c oxidase subunit FixP from Azorhizobium caulinodans (strain ATCC 43989 / DSM 5975 / JCM 20966 / LMG 6465 / NBRC 14845 / NCIMB 13405 / ORS 571).